The following is a 236-amino-acid chain: Small ribosomal subunit protein uS2c (236 aa).

This sequence belongs to the universal ribosomal protein uS2 family.

The protein resides in the plastid. Its subcellular location is the chloroplast. In Gossypium barbadense (Sea Island cotton), this protein is Small ribosomal subunit protein uS2c (rps2).